Reading from the N-terminus, the 51-residue chain is Large ribosomal subunit protein bL33 (51 aa).

Belongs to the bacterial ribosomal protein bL33 family.

The chain is Large ribosomal subunit protein bL33 from Idiomarina loihiensis (strain ATCC BAA-735 / DSM 15497 / L2-TR).